The following is a 77-amino-acid chain: UPF0346 protein LMOf2365_1885 (77 aa).

The protein belongs to the UPF0346 family.

The sequence is that of UPF0346 protein LMOf2365_1885 from Listeria monocytogenes serotype 4b (strain F2365).